The primary structure comprises 58 residues: Amyloid-beta precursor protein (58 aa).

At 1-33 (SEVKMDAEFRHDSGYEVHHQKLVFFAEDVGSNK) the chain is on the extracellular side. Positions 11, 15, 18, and 19 each coordinate Cu(2+). The Zn(2+) site is built by His-11, Tyr-15, His-18, and His-19. A helical transmembrane segment spans residues 34 to 57 (GAIIGLMVGGVVIATVIVITLVML). Lys-58 is a topological domain (cytoplasmic).

It belongs to the APP family. Binds, via its C-terminus, to the PID domain of several cytoplasmic proteins, including APBB family members, the APBA family, MAPK8IP1, SHC1 and NUMB and DAB1. Binding to DAB1 inhibits its serine phosphorylation. Interacts (via NPXY motif) with DAB2 (via PID domain); the interaction is impaired by tyrosine phosphorylation of the NPXY motif. Also interacts with GPCR-like protein BPP, APPBP1, IB1, KNS2 (via its TPR domains), APPBP2 (via BaSS) and DDB1. In vitro, it binds MAPT via the MT-binding domains. Associates with microtubules in the presence of ATP and in a kinesin-dependent manner. Interacts, through a C-terminal domain, with GNAO1. Interacts with CPEB1, ANKS1B and AGER. Interacts with ITM2B. Interacts with ITM2C. Interacts with IDE. Can form homodimers; dimerization is enhanced in the presence of Cu(2+) ions. Can form homodimers; this is promoted by heparin binding. Interacts with SORL1 (via N-terminal ectodomain); this interaction retains APP in the trans-Golgi network and reduces processing into soluble APP-alpha and amyloid-beta peptides. Interacts with PLD3. Interacts with VDAC1. Interacts with NSG1; could regulate APP processing. Amyloid-beta protein 42 interacts with FPR2. Interacts with LRRK2. Interacts (via cytoplasmic domain) with KIF5B. Interacts (via C-terminus) with APBB2/FE65L1 (via C-terminus). Interacts (via intracellular domain) with APBB3. In terms of processing, proteolytically processed under normal cellular conditions. Cleavage either by alpha-secretase, beta-secretase or theta-secretase leads to generation and extracellular release of soluble APP peptides, S-APP-alpha and S-APP-beta, and the retention of corresponding membrane-anchored C-terminal fragments, C80, C83 and C99. Subsequent processing of C80 and C83 by gamma-secretase yields P3 peptides. This is the major secretory pathway and is non-amyloidogenic. Alternatively, presenilin/nicastrin-mediated gamma-secretase processing of C99 releases the amyloid-beta proteins, amyloid-beta protein 40 and amyloid-beta protein 42, major components of amyloid plaques, and the cytotoxic C-terminal fragments, gamma-CTF(50), gamma-CTF(57) and gamma-CTF(59). PSEN1 cleavage is more efficient with C83 than with C99 as substrate (in vitro). Amyloid-beta protein 40 and Amyloid-beta protein 42 are cleaved by ACE. Many other minor amyloid-beta peptides, amyloid-beta 1-X peptides, are found in cerebral spinal fluid (CSF) including the amyloid-beta X-15 peptides, produced from the cleavage by alpha-secretase.

Its subcellular location is the cell membrane. The protein resides in the membrane. It localises to the perikaryon. It is found in the cell projection. The protein localises to the growth cone. Its subcellular location is the clathrin-coated pit. The protein resides in the early endosome. It localises to the cytoplasmic vesicle. It is found in the secreted. The protein localises to the cell surface. Its subcellular location is the nucleus. The protein resides in the cytoplasm. Its function is as follows. Functions as a cell surface receptor and performs physiological functions on the surface of neurons relevant to neurite growth, neuronal adhesion and axonogenesis. Interaction between APP molecules on neighboring cells promotes synaptogenesis. Involved in cell mobility and transcription regulation through protein-protein interactions. Can promote transcription activation through binding to APBB1-KAT5 and inhibit Notch signaling through interaction with Numb. Couples to apoptosis-inducing pathways such as those mediated by G(o) and JIP. Inhibits G(o)-alpha ATPase activity. Acts as a kinesin I membrane receptor, mediating the axonal transport of beta-secretase and presenilin 1. By acting as a kinesin I membrane receptor, plays a role in axonal anterograde transport of cargo towards synapses in axons. May be involved in copper homeostasis/oxidative stress through copper ion reduction. In vitro, copper-metallated APP induces neuronal death directly or is potentiated through Cu(2+)-mediated low-density lipoprotein oxidation. Can regulate neurite outgrowth through binding to components of the extracellular matrix such as heparin and collagen I and IV. Induces a AGER-dependent pathway that involves activation of p38 MAPK, resulting in internalization of amyloid-beta peptide and mitochondrial dysfunction in cultured cortical neurons. Provides Cu(2+) ions for GPC1 which are required for release of nitric oxide (NO) and subsequent degradation of the heparan sulfate chains on GPC1. The sequence is that of Amyloid-beta precursor protein (APP) from Ovis aries (Sheep).